We begin with the raw amino-acid sequence, 551 residues long: MFS-type transporter ATEG_00331 (551 aa).

Positions 1-18 are cleaved as a signal peptide; that stretch reads MKAWLLVSSLCLSTFIAA. The next 4 membrane-spanning stretches (helical) occupy residues 40–60, 71–91, 102–122, and 132–152; these read LEFT…TPPW, PVLM…ALAI, IQGT…GDVF, and GVLG…GGAF. N-linked (GlcNAc...) asparagine glycosylation is found at asparagine 165 and asparagine 178. 8 helical membrane-spanning segments follow: residues 179–199, 206–228, 233–255, 324–344, 354–374, 380–400, 417–437, and 493–513; these read LTTS…FLEV, IIEG…TVMF, GYGG…FGIG, VYLL…GLYI, IYFG…LQPY, IIIF…APII, TVFF…GVIF, and SEWI…VFIS. A glycan (N-linked (GlcNAc...) asparagine) is linked at asparagine 524.

The protein belongs to the major facilitator superfamily. TCR/Tet family.

It localises to the membrane. MFS-type transporter; part of the gene cluster that mediates the biosynthesis of isoflavipucine. This Aspergillus terreus (strain NIH 2624 / FGSC A1156) protein is MFS-type transporter ATEG_00331.